Here is a 77-residue protein sequence, read N- to C-terminus: Acyl carrier protein (77 aa).

Residues 2-77 enclose the Carrier domain; the sequence is SSIEKRVKEI…DAIDYITEHT (76 aa). Position 37 is an O-(pantetheine 4'-phosphoryl)serine (serine 37).

Belongs to the acyl carrier protein (ACP) family. Post-translationally, 4'-phosphopantetheine is transferred from CoA to a specific serine of apo-ACP by AcpS. This modification is essential for activity because fatty acids are bound in thioester linkage to the sulfhydryl of the prosthetic group.

It localises to the cytoplasm. Its pathway is lipid metabolism; fatty acid biosynthesis. In terms of biological role, carrier of the growing fatty acid chain in fatty acid biosynthesis. In Geobacter sulfurreducens (strain ATCC 51573 / DSM 12127 / PCA), this protein is Acyl carrier protein.